We begin with the raw amino-acid sequence, 459 residues long: Protein ABHD15 (459 aa).

Residues 1-28 (MPPWAAALALLLAALALLLLRPWKRAVG) form the signal peptide. Catalysis depends on charge relay system residues Asp351 and His382. Ser425 is modified (phosphoserine).

Belongs to the AB hydrolase superfamily. AB hydrolase 4 family. Interacts with PDE3B; this interaction regulates PDE3B's stability and expression and, thereby, impacts the antilipolytic action of insulin. Mainly expressed in adipocytes and adipose depots, followed by a weak expression in liver and pancreas. In white adipose tissue (WAT), only expressed in mature adipocytes and primary adipocytes differentiated from stromal vascular cells (SVCs), but not in undifferentiated SVCs.

Its subcellular location is the secreted. In terms of biological role, may regulate adipocyte lipolysis and liver lipid accumulation. The polypeptide is Protein ABHD15 (Mus musculus (Mouse)).